Consider the following 318-residue polypeptide: tRNA uridine(34) hydroxylase (318 aa).

The Rhodanese domain maps to 123–217 (EDDDTVIIDA…YGKDPETKSE (95 aa)). Catalysis depends on cysteine 177, which acts as the Cysteine persulfide intermediate.

The protein belongs to the TrhO family.

The enzyme catalyses uridine(34) in tRNA + AH2 + O2 = 5-hydroxyuridine(34) in tRNA + A + H2O. Catalyzes oxygen-dependent 5-hydroxyuridine (ho5U) modification at position 34 in tRNAs. The protein is tRNA uridine(34) hydroxylase of Staphylococcus aureus (strain COL).